Reading from the N-terminus, the 137-residue chain is Large ribosomal subunit protein uL16 (137 aa).

Belongs to the universal ribosomal protein uL16 family. As to quaternary structure, part of the 50S ribosomal subunit.

Binds 23S rRNA and is also seen to make contacts with the A and possibly P site tRNAs. The protein is Large ribosomal subunit protein uL16 of Ectopseudomonas mendocina (strain ymp) (Pseudomonas mendocina).